Reading from the N-terminus, the 209-residue chain is Glutathione S-transferase 1, isoform C (209 aa).

Positions 1-80 (MDFYYLPGSA…YLAEKYGKDD (80 aa)) constitute a GST N-terminal domain. Glutathione contacts are provided by residues serine 9, 50–52 (HCI), and 64–66 (ESR). Positions 86-207 (DPQKRAVVNQ…AGIEEFKKYF (122 aa)) constitute a GST C-terminal domain.

Belongs to the GST superfamily. Theta family. In terms of assembly, homodimer.

It catalyses the reaction RX + glutathione = an S-substituted glutathione + a halide anion + H(+). The catalysed reaction is 1,1,1-trichloro-2,2-bis(4-chlorophenyl)ethane = 1,1-dichloro-2,2-bis(4-chlorophenyl)ethylene + chloride + H(+). Conjugation of reduced glutathione to a wide number of exogenous and endogenous hydrophobic electrophiles. Has DDT dehydrochlorinase activity. This is Glutathione S-transferase 1, isoform C (GstD1) from Anopheles gambiae (African malaria mosquito).